The chain runs to 691 residues: F-box/LRR-repeat protein 5 (691 aa).

Residues 1 to 159 form a hemerythrin-like region; sequence MAPFPEEVDV…IKKKVIAQHC (159 aa). Positions 15, 57, 58, 61, 80, 126, and 130 each coordinate Fe(3+). Residues 202-248 form the F-box domain; that stretch reads STGITHLPPEVMLSIFSYLNPQELCRCSQVSMKWSQLTKTGSLWKHL. LRR repeat units follow at residues 340-364, 365-392, 393-418, 479-508, 576-607, 608-635, and 636-661; these read SSAVSSKMVRQILELCPNLEHLDLT, QTDISDSAFDSWSWLGCCQSLRHLDLSG, CEKITDVALEKISRALGILTSHQSGF, LWMLDAEDLADIEDTVEWRHRNVESLCVVE, TRLPRGKDLIYFGSEKSDQETGRVLLFLSLSG, CYQITDHGLRVLTLGGGLPYLEHLNLSG, and CLTITGAGLQDLVSACPSLNDEYFYY. The [2Fe-2S] cluster site is built by Cys-662, Cys-676, Cys-686, and Cys-687.

In terms of assembly, part of a SCF (SKP1-cullin-F-box) protein ligase complex. Interacts with ACO1/IRP1, IREB2/IRP2; the interaction depends on the [2Fe-2S] cluster. Interacts with DCTN1/p150-glued. [2Fe-2S] cluster serves as cofactor. Post-translationally, polybiquitinated upon iron and oxygen depletion, leading to its degradation by the proteasome. Ubiquitination is regulated by the hemerythrin-like region that acts as an oxygen and iron sensor. Undergoes constitutive ubiquitin-dependent degradation at the steady state by HERC2.

Its subcellular location is the cytoplasm. It is found in the perinuclear region. It localises to the nucleus. Its pathway is protein modification; protein ubiquitination. An iron-sulfur cluster promotes IRP2 polyubiquitination and degradation in response to both iron and oxygen concentrations. Its function is as follows. Component of some SCF (SKP1-cullin-F-box) protein ligase complex that plays a central role in iron homeostasis by promoting the ubiquitination and subsequent degradation of IREB2/IRP2. The C-terminal domain of FBXL5 contains a redox-sensitive [2Fe-2S] cluster that, upon oxidation, promotes binding to IRP2 to effect its oxygen-dependent degradation. Under iron deficiency conditions, the N-terminal hemerythrin-like (Hr) region, which contains a diiron metal center, cannot bind iron and undergoes conformational changes that destabilize the FBXL5 protein and cause its ubiquitination and degradation. When intracellular iron levels start rising, the Hr region is stabilized. Additional increases in iron levels facilitate the assembly and incorporation of a redox active [2Fe-2S] cluster in the C-terminal domain. Only when oxygen level is high enough to maintain the cluster in its oxidized state can FBXL5 recruit IRP2 as a substrate for polyubiquination and degradation. Promotes ubiquitination and subsequent degradation of the dynactin complex component DCTN1. Within the nucleus, promotes the ubiquitination of SNAI1; preventing its interaction with DNA and promoting its degradation. Negatively regulates DNA damage response by mediating the ubiquitin-proteasome degradation of the DNA repair protein NABP2. In Pongo abelii (Sumatran orangutan), this protein is F-box/LRR-repeat protein 5 (FBXL5).